The following is a 1209-amino-acid chain: ATP-dependent helicase/nuclease subunit A (1209 aa).

In terms of domain architecture, UvrD-like helicase ATP-binding spans 9–482 (SQWTDEQWQA…IDLAKNFRSR (474 aa)). Position 30 to 37 (30 to 37 (AAAGSGKT)) interacts with ATP. The UvrD-like helicase C-terminal domain occupies 510 to 798 (AALRFGAQDY…RMMTIHKSKG (289 aa)).

Belongs to the helicase family. AddA subfamily. As to quaternary structure, heterodimer of AddA and AddB/RexB. Mg(2+) serves as cofactor.

The catalysed reaction is Couples ATP hydrolysis with the unwinding of duplex DNA by translocating in the 3'-5' direction.. The enzyme catalyses ATP + H2O = ADP + phosphate + H(+). Functionally, the heterodimer acts as both an ATP-dependent DNA helicase and an ATP-dependent, dual-direction single-stranded exonuclease. Recognizes the chi site generating a DNA molecule suitable for the initiation of homologous recombination. The AddA nuclease domain is required for chi fragment generation; this subunit has the helicase and 3' -&gt; 5' nuclease activities. The protein is ATP-dependent helicase/nuclease subunit A of Anoxybacillus flavithermus (strain DSM 21510 / WK1).